We begin with the raw amino-acid sequence, 230 residues long: Large ribosomal subunit protein uL1 (230 aa).

This sequence belongs to the universal ribosomal protein uL1 family. Part of the 50S ribosomal subunit.

Functionally, binds directly to 23S rRNA. The L1 stalk is quite mobile in the ribosome, and is involved in E site tRNA release. Protein L1 is also a translational repressor protein, it controls the translation of the L11 operon by binding to its mRNA. This chain is Large ribosomal subunit protein uL1, found in Sulfurimonas denitrificans (strain ATCC 33889 / DSM 1251) (Thiomicrospira denitrificans (strain ATCC 33889 / DSM 1251)).